A 475-amino-acid polypeptide reads, in one-letter code: Glutamate--tRNA ligase 1 (475 aa).

Residues 11-21 (PSPTGYLHIGG) carry the 'HIGH' region motif. A 'KMSKS' region motif is present at residues 240-244 (KLSKR). K243 contributes to the ATP binding site.

It belongs to the class-I aminoacyl-tRNA synthetase family. Glutamate--tRNA ligase type 1 subfamily. As to quaternary structure, monomer.

The protein localises to the cytoplasm. The enzyme catalyses tRNA(Glu) + L-glutamate + ATP = L-glutamyl-tRNA(Glu) + AMP + diphosphate. Functionally, catalyzes the attachment of glutamate to tRNA(Glu) in a two-step reaction: glutamate is first activated by ATP to form Glu-AMP and then transferred to the acceptor end of tRNA(Glu). This Methylobacterium radiotolerans (strain ATCC 27329 / DSM 1819 / JCM 2831 / NBRC 15690 / NCIMB 10815 / 0-1) protein is Glutamate--tRNA ligase 1.